The sequence spans 171 residues: Adenine phosphoribosyltransferase (171 aa).

Belongs to the purine/pyrimidine phosphoribosyltransferase family. Homodimer.

The protein resides in the cytoplasm. It carries out the reaction AMP + diphosphate = 5-phospho-alpha-D-ribose 1-diphosphate + adenine. It functions in the pathway purine metabolism; AMP biosynthesis via salvage pathway; AMP from adenine: step 1/1. Functionally, catalyzes a salvage reaction resulting in the formation of AMP, that is energically less costly than de novo synthesis. This is Adenine phosphoribosyltransferase from Geotalea daltonii (strain DSM 22248 / JCM 15807 / FRC-32) (Geobacter daltonii).